We begin with the raw amino-acid sequence, 197 residues long: Imidazoleglycerol-phosphate dehydratase (197 aa).

Belongs to the imidazoleglycerol-phosphate dehydratase family.

The protein resides in the cytoplasm. It catalyses the reaction D-erythro-1-(imidazol-4-yl)glycerol 3-phosphate = 3-(imidazol-4-yl)-2-oxopropyl phosphate + H2O. The protein operates within amino-acid biosynthesis; L-histidine biosynthesis; L-histidine from 5-phospho-alpha-D-ribose 1-diphosphate: step 6/9. This Clostridium acetobutylicum (strain ATCC 824 / DSM 792 / JCM 1419 / IAM 19013 / LMG 5710 / NBRC 13948 / NRRL B-527 / VKM B-1787 / 2291 / W) protein is Imidazoleglycerol-phosphate dehydratase.